The following is a 211-amino-acid chain: tRNA (guanine-N(7)-)-methyltransferase (211 aa).

The S-adenosyl-L-methionine site is built by Glu-44, Asp-69, Asp-96, and Asp-118. Asp-118 is an active-site residue. Lys-122 is a binding site for substrate. Positions 124 to 129 (KHEKRR) are interaction with RNA. Substrate contacts are provided by residues Asp-154 and 191–194 (TEYE).

It belongs to the class I-like SAM-binding methyltransferase superfamily. TrmB family.

The enzyme catalyses guanosine(46) in tRNA + S-adenosyl-L-methionine = N(7)-methylguanosine(46) in tRNA + S-adenosyl-L-homocysteine. Its pathway is tRNA modification; N(7)-methylguanine-tRNA biosynthesis. In terms of biological role, catalyzes the formation of N(7)-methylguanine at position 46 (m7G46) in tRNA. The polypeptide is tRNA (guanine-N(7)-)-methyltransferase (Streptococcus pyogenes serotype M12 (strain MGAS2096)).